Reading from the N-terminus, the 512-residue chain is Dihydroniloticin synthase CYP71CD1 (512 aa).

Residues 7 to 27 form a helical membrane-spanning segment; sequence YFTVTSLLVFLTFLLRLVWGW. C451 lines the heme pocket.

It belongs to the cytochrome P450 family. Heme serves as cofactor. In terms of tissue distribution, accumulates in mature fruits and in juice vesicles.

It is found in the membrane. It carries out the reaction tirucalla-7,24-dien-3beta-ol + 2 reduced [NADPH--hemoprotein reductase] + 2 O2 = dihydroniloticin + 2 oxidized [NADPH--hemoprotein reductase] + 2 H2O + 2 H(+). The protein operates within secondary metabolite biosynthesis; terpenoid biosynthesis. In terms of biological role, monooxygenase involved in the biosynthesis of limonoids triterpene natural products such as limonin, a compound with insecticidal activity responsible for the bitter taste in citrus. Catalyzes the conversion of tirucalladienol to dihydroniloticin. In Citrus sinensis (Sweet orange), this protein is Dihydroniloticin synthase CYP71CD1.